A 303-amino-acid chain; its full sequence is N-acetyl-D-glucosamine kinase (303 aa).

ATP contacts are provided by residues 4-11 and 133-140; these read GFDVGGTK and GFGGGLVF. Positions 157, 177, 179, and 184 each coordinate Zn(2+).

This sequence belongs to the ROK (NagC/XylR) family. NagK subfamily.

It catalyses the reaction N-acetyl-D-glucosamine + ATP = N-acetyl-D-glucosamine 6-phosphate + ADP + H(+). It participates in cell wall biogenesis; peptidoglycan recycling. Catalyzes the phosphorylation of N-acetyl-D-glucosamine (GlcNAc) derived from cell-wall degradation, yielding GlcNAc-6-P. The chain is N-acetyl-D-glucosamine kinase from Photobacterium profundum (strain SS9).